The chain runs to 74 residues: Large ribosomal subunit protein bL31 (74 aa).

Zn(2+) is bound by residues Cys16, Cys18, Cys38, and Cys41.

The protein belongs to the bacterial ribosomal protein bL31 family. Type A subfamily. In terms of assembly, part of the 50S ribosomal subunit. The cofactor is Zn(2+).

Functionally, binds the 23S rRNA. This chain is Large ribosomal subunit protein bL31, found in Salinispora arenicola (strain CNS-205).